The sequence spans 376 residues: Arf-GAP with dual PH domain-containing protein 2 (376 aa).

The region spanning 9–130 is the Arf-GAP domain; the sequence is KRLLELLQAA…EFMAEKAVSP (122 aa). The C4-type zinc-finger motif lies at 25-48; that stretch reads CADCGAADPDWASYKLGVFICLHC. PH domains lie at 131-232 and 254-360; these read PGDR…AARL and NYLK…GVLS.

As to expression, expressed in many tissues, with highest levels in fat, heart and skeletal muscle. Also detected in kidney, liver and lung.

Its subcellular location is the cytoplasm. The protein localises to the cell membrane. Its function is as follows. GTPase-activating protein for the ADP ribosylation factor family (Potential). Binds phosphatidylinositol 4,5-bisphosphate, phosphatidylinositol 3,4,5-trisphosphate (PtdInsP3) and inositol 1,3,4,5-tetrakisphosphate (InsP4). Binding of phosphatidylinositol 3,5-bisphosphate and phosphatidylinositol 3,4-bisphosphate occurs at a much lower affinity. Possesses a stoichiometry of two binding sites for InsP4 with identical affinity. This chain is Arf-GAP with dual PH domain-containing protein 2 (Adap2), found in Rattus norvegicus (Rat).